The chain runs to 238 residues: Orotidine 5'-phosphate decarboxylase (238 aa).

Substrate is bound by residues D11, K32, 59–68 (DLKFHDIPNT), T123, R185, Q194, G214, and R215. K61 acts as the Proton donor in catalysis.

This sequence belongs to the OMP decarboxylase family. Type 1 subfamily. In terms of assembly, homodimer.

The enzyme catalyses orotidine 5'-phosphate + H(+) = UMP + CO2. It functions in the pathway pyrimidine metabolism; UMP biosynthesis via de novo pathway; UMP from orotate: step 2/2. In terms of biological role, catalyzes the decarboxylation of orotidine 5'-monophosphate (OMP) to uridine 5'-monophosphate (UMP). The sequence is that of Orotidine 5'-phosphate decarboxylase from Nostoc sp. (strain PCC 7120 / SAG 25.82 / UTEX 2576).